A 222-amino-acid polypeptide reads, in one-letter code: Probable transaldolase (222 aa).

Lys91 (schiff-base intermediate with substrate) is an active-site residue.

The protein belongs to the transaldolase family. Type 3B subfamily.

The protein resides in the cytoplasm. It carries out the reaction D-sedoheptulose 7-phosphate + D-glyceraldehyde 3-phosphate = D-erythrose 4-phosphate + beta-D-fructose 6-phosphate. Its pathway is carbohydrate degradation; pentose phosphate pathway; D-glyceraldehyde 3-phosphate and beta-D-fructose 6-phosphate from D-ribose 5-phosphate and D-xylulose 5-phosphate (non-oxidative stage): step 2/3. In terms of biological role, transaldolase is important for the balance of metabolites in the pentose-phosphate pathway. The protein is Probable transaldolase of Chlorobium chlorochromatii (strain CaD3).